A 604-amino-acid polypeptide reads, in one-letter code: MLIIFKELTKQFEQSLLDSLEKNDKRGEFDNLRKNLVTQSSKEEFGDYQCNVCLCLSKIYKKKPREISEDFVYLLNKNKSISKLCKSLEIAGPGFINIKLKDEVLINEIKSNIQCPRAGIPLIKKDLDSGLSNKVIVDFSSPNIAKEMHVGHLRSTIIGDSISRIFELRGYQVLRLNHVGDWGTQFGMLITQLKDLYSNDLEEIGKIKISDLVEFYKASKKRFDNESEFQKRSREEVVKLQSGDSKSIQAWKLLCDQSRKEFDEIYKNLKIKIKERGESFYNPFLKSVIEDLKFKKILIEDQGAKCVFLDGMTNKEGKPLPLIVQKKDGGFNYATTDLAAIRYRFNKAPNGDDASRIIYVTDHGQANHFAGVFQVAKKAKWIPDKCQVDHVPFGLVQGIDGKKLKTREGETIRLKDLLNEAVRRAKEDLLKRLEDEDRYETEEFIANTSRIIGLGAVKYADLSQNRITNYQFSFDKMLSLNGNTAPYLLYTLVRISGIKRKNDFVYDSEDFQYINYEHKSEWKLIRKLLKFDEVIISIEKDLMPNRLCNYLFELCQTFNRFYDQVPILKEEKNIKISRLNLCDLTAKTLKLSLELLGIETLERM.

The short motif at 142–152 (PNIAKEMHVGH) is the 'HIGH' region element.

The protein belongs to the class-I aminoacyl-tRNA synthetase family. In terms of assembly, monomer.

The protein resides in the cytoplasm. It catalyses the reaction tRNA(Arg) + L-arginine + ATP = L-arginyl-tRNA(Arg) + AMP + diphosphate. The polypeptide is Arginine--tRNA ligase (Prochlorococcus marinus (strain MIT 9312)).